The sequence spans 194 residues: Adenylate kinase isoenzyme 1 (194 aa).

Met1 carries the N-acetylmethionine modification. Residue 18–23 (GSGKGT) participates in ATP binding. The residue at position 38 (Ser38) is a Phosphoserine. Positions 38–67 (STGDLLRAEVSSGSARGKMLSEIMEKGQLV) are NMP. AMP-binding positions include Thr39, Arg44, 65–67 (QLV), 94–97 (GYPR), and Gln101. Residues 131-141 (KRGETSGRVDD) form an LID region. Residue Arg132 participates in ATP binding. AMP-binding residues include Arg138 and Arg149. Residue Gly177 participates in ATP binding.

This sequence belongs to the adenylate kinase family. AK1 subfamily. Monomer. Mg(2+) serves as cofactor.

It localises to the cytoplasm. It catalyses the reaction a ribonucleoside 5'-phosphate + ATP = a ribonucleoside 5'-diphosphate + ADP. The enzyme catalyses AMP + ATP = 2 ADP. It carries out the reaction dAMP + ATP = dADP + ADP. The catalysed reaction is dATP + AMP = dADP + ADP. It catalyses the reaction dAMP + dATP = 2 dADP. The enzyme catalyses a 2'-deoxyribonucleoside 5'-diphosphate + ATP = a 2'-deoxyribonucleoside 5'-triphosphate + ADP. It carries out the reaction a ribonucleoside 5'-diphosphate + ATP = a ribonucleoside 5'-triphosphate + ADP. The catalysed reaction is CDP + GTP = CTP + GDP. It catalyses the reaction GDP + ATP = GTP + ADP. The enzyme catalyses UDP + ATP = UTP + ADP. It carries out the reaction GTP + UDP = UTP + GDP. The catalysed reaction is dTDP + GTP = dTTP + GDP. It catalyses the reaction dCDP + GTP = dCTP + GDP. The enzyme catalyses dGDP + ATP = dGTP + ADP. It carries out the reaction dADP + GTP = dATP + GDP. The catalysed reaction is thiamine diphosphate + ADP = thiamine triphosphate + AMP. Its function is as follows. Catalyzes the reversible transfer of the terminal phosphate group between ATP and AMP. Also displays broad nucleoside diphosphate kinase activity. Plays an important role in cellular energy homeostasis and in adenine nucleotide metabolism. Also catalyzes at a very low rate the synthesis of thiamine triphosphate (ThTP) from thiamine diphosphate (ThDP) and ADP. This is Adenylate kinase isoenzyme 1 from Sus scrofa (Pig).